We begin with the raw amino-acid sequence, 860 residues long: MVSRSYSNLLELASGDSPTFGRMNRQIPRIMAVAGIMSNIDNDSKDTDLSPKDRIIIVANELPIRAQRRVDGNGSGSSSSSTCCSKGWNFSWDENSLLLQLKDGLGDEAIEVIYVGCLKEEIPLNEQEEVYQILLESFKCVPTFLPLDLYTRYYHGFCKQQLWPLFHYMLPLSPDLGGRFDRTLWQAYVSVNKIFADRIMEVINPEDDFVWIHDYHLMVLPTFLRKRFNRVKLGFFLHSPFPSSEIYKTLPIREELLRALLNSDLIGFHTFDYARHFLSCCSRMLGLTYESKRGYIGLEYYGRTVSIKILPVGIHMGQLQSVLSLPETERKVGELIERYGRKGRTMLLGVDDMDIFKGITLKLLAMEQLLMQHPEWQGKVVLVQIANPARGKGKDVKEMQAETYSTVKRINETFGRPGYDPIVLIDAPLKFYERVAYYVVAECCLVTAVRDGMNLIPYEYIVSRQGNEKLDKILKLEANNRNKKSMLVVSEFIGCSPSLSGAIRVNPWNVDAVADAMDSALEVAEPEKQLRHEKHYKYVSTHDVGYWARSFLQDLERSCGEHGRRRCWGIGFGLSFRVVALDQSFRKLSMEHIVSAYKRTKTRAILLDYDDTLMPQGSIDKRPSSKSIDILNTLCRDKGNLVFIVSAKSRETLSDWFSPCEKLGIAAEHGYFLRLRKAVEWENCVAAVDCSWKQIAEPVMELYTETTDGSTIEDKETALVWSYEDADPDFGSCQAKELLDHLESVLANEPVTVKRGQNYVEVKPQGVSKGLIARRMLSMMQERGTLPEFVLCIGDDRSDEDMFEVICSSTEGPSIAPRAEIFACTVGQKPSKAKYYLDDTTEIVRLMHGLASVTDQITPV.

Residue serine 5 is modified to Phosphoserine. Positions 53–557 are glycosyltransferase; it reads DRIIIVANEL…ARSFLQDLER (505 aa).

It in the N-terminal section; belongs to the glycosyltransferase 20 family. This sequence in the C-terminal section; belongs to the trehalose phosphatase family. In terms of assembly, binds to the phosphopeptide-binding site of GRF/14-3-3. Post-translationally, phosphorylated. Expressed in seedlings, leaves, stems, flowers, siliques and roots.

It catalyses the reaction D-glucose 6-phosphate + UDP-alpha-D-glucose = alpha,alpha-trehalose 6-phosphate + UDP + H(+). In terms of biological role, regulates plant architecture, shape of epidermal pavement cells and branching of trichomes. This is Alpha,alpha-trehalose-phosphate synthase [UDP-forming] 6 from Arabidopsis thaliana (Mouse-ear cress).